A 492-amino-acid chain; its full sequence is Trigger factor (492 aa).

A PPIase FKBP-type domain is found at 164–249 (GDLVVVDFVG…VSDVRVPRKA (86 aa)). The segment at 440–492 (EAEEDSIGKHDHDHDHKEKASDKPKAKKAAAPKKKAAPKKKAAPKAEKKSSDE) is disordered. Positions 445–463 (SIGKHDHDHDHKEKASDKP) are enriched in basic and acidic residues. Basic residues predominate over residues 464–482 (KAKKAAAPKKKAAPKKKAA). Basic and acidic residues predominate over residues 483–492 (PKAEKKSSDE).

It belongs to the FKBP-type PPIase family. Tig subfamily.

It localises to the cytoplasm. It carries out the reaction [protein]-peptidylproline (omega=180) = [protein]-peptidylproline (omega=0). Involved in protein export. Acts as a chaperone by maintaining the newly synthesized protein in an open conformation. Functions as a peptidyl-prolyl cis-trans isomerase. This chain is Trigger factor, found in Zymomonas mobilis subsp. mobilis (strain ATCC 31821 / ZM4 / CP4).